Here is a 468-residue protein sequence, read N- to C-terminus: Adenosylhomocysteinase (468 aa).

Substrate-binding residues include Thr57, Asp132, and Glu194. Residue 195–197 (TTT) participates in NAD(+) binding. Substrate contacts are provided by Lys224 and Asp228. Residues Asn229, 258–263 (GFGDVG), Glu281, Asn316, 337–339 (IGH), and Asn382 contribute to the NAD(+) site.

The protein belongs to the adenosylhomocysteinase family. NAD(+) serves as cofactor.

The protein resides in the cytoplasm. The catalysed reaction is S-adenosyl-L-homocysteine + H2O = L-homocysteine + adenosine. It participates in amino-acid biosynthesis; L-homocysteine biosynthesis; L-homocysteine from S-adenosyl-L-homocysteine: step 1/1. May play a key role in the regulation of the intracellular concentration of adenosylhomocysteine. This Methylobacterium sp. (strain 4-46) protein is Adenosylhomocysteinase.